The following is a 371-amino-acid chain: Cytochrome b (371 aa).

A run of 4 helical transmembrane segments spans residues 25 to 45 (FGSM…FLAV), 69 to 90 (WLMQ…YIHI), 105 to 125 (WMSG…GYVL), and 170 to 190 (FFAL…LHII). 2 residues coordinate heme b: H75 and H89. Heme b-binding residues include H174 and H188. H193 serves as a coordination point for a ubiquinone. A run of 4 helical transmembrane segments spans residues 218 to 238 (YKDL…VSFF), 280 to 300 (LGGA…PLTH), 312 to 332 (LSQL…WAAT), and 339 to 358 (YIII…ISTP).

It belongs to the cytochrome b family. The cytochrome bc1 complex contains 3 respiratory subunits (MT-CYB, CYC1 and UQCRFS1), 2 core proteins (UQCRC1 and UQCRC2) and probably 6 low-molecular weight proteins. The cofactor is heme b.

The protein resides in the mitochondrion inner membrane. In terms of biological role, component of the ubiquinol-cytochrome c reductase complex (complex III or cytochrome b-c1 complex) that is part of the mitochondrial respiratory chain. The b-c1 complex mediates electron transfer from ubiquinol to cytochrome c. Contributes to the generation of a proton gradient across the mitochondrial membrane that is then used for ATP synthesis. The chain is Cytochrome b (MT-CYB) from Python regius (Ball python).